The primary structure comprises 118 residues: Large ribosomal subunit protein uL18 (118 aa).

The disordered stretch occupies residues 1-25; that stretch reads MITKPDKNKVRQKRHRRVRGKLSGT. Basic residues predominate over residues 10–20; it reads VRQKRHRRVRG.

This sequence belongs to the universal ribosomal protein uL18 family. In terms of assembly, part of the 50S ribosomal subunit; part of the 5S rRNA/L5/L18/L25 subcomplex. Contacts the 5S and 23S rRNAs.

Its function is as follows. This is one of the proteins that bind and probably mediate the attachment of the 5S RNA into the large ribosomal subunit, where it forms part of the central protuberance. The protein is Large ribosomal subunit protein uL18 of Streptococcus gordonii (strain Challis / ATCC 35105 / BCRC 15272 / CH1 / DL1 / V288).